The primary structure comprises 235 residues: Caveolin-1 (235 aa).

The Cytoplasmic segment spans residues 1-161; the sequence is MSTEQDIKTE…LVSLLALPFT (161 aa). Residues 29–72 form a disordered region; the sequence is GEAVVAPEEPKPKKNWFTFGKKKAAPTDETNIEEGGAPGDEPVK. The segment at residues 162–182 is an intramembrane region (helical); the sequence is IIFAIFFGLLASINVFIIVPL. Over 183-235 the chain is Cytoplasmic; that stretch reads GKLLSIPGTLLAKLWNWLIHAIFDPIASAVGLIFSNFNIRKYGINQETTAPCV. Cys234 carries the S-palmitoyl cysteine lipid modification.

This sequence belongs to the caveolin family. As to quaternary structure, homooligomer containing 14-16 monomers per oligomer.

It localises to the golgi apparatus membrane. The protein resides in the cell membrane. It is found in the membrane. Its subcellular location is the caveola. Functionally, may act as a scaffolding protein within caveolar membranes. Interacts directly with G-protein alpha subunits and can functionally regulate their activity. This Caenorhabditis elegans protein is Caveolin-1 (cav-1).